The primary structure comprises 503 residues: Probable Xaa-Pro aminopeptidase TSTA_094700 (503 aa).

Residues D277, D288, E428, and E467 each coordinate Mn(2+).

The protein belongs to the peptidase M24B family. The cofactor is Mn(2+).

It catalyses the reaction Release of any N-terminal amino acid, including proline, that is linked to proline, even from a dipeptide or tripeptide.. Functionally, catalyzes the removal of a penultimate prolyl residue from the N-termini of peptides. This chain is Probable Xaa-Pro aminopeptidase TSTA_094700, found in Talaromyces stipitatus (strain ATCC 10500 / CBS 375.48 / QM 6759 / NRRL 1006) (Penicillium stipitatum).